The sequence spans 172 residues: Small ribosomal subunit protein uS5 (172 aa).

Residues 17-80 (LKEKMIAINR…EEARRNMTKV (64 aa)) enclose the S5 DRBM domain.

This sequence belongs to the universal ribosomal protein uS5 family. In terms of assembly, part of the 30S ribosomal subunit. Contacts proteins S4 and S8.

Its function is as follows. With S4 and S12 plays an important role in translational accuracy. In terms of biological role, located at the back of the 30S subunit body where it stabilizes the conformation of the head with respect to the body. This Polaromonas naphthalenivorans (strain CJ2) protein is Small ribosomal subunit protein uS5.